Consider the following 493-residue polypeptide: MSLLKMEYNLYAELKKMTCGQPLSLFNEDGDFVEVEPGSSFKFLIPKGFYASPSVKTSLVFETLTTTDNKITSINPTNAPKLYPLQRKVVSEVVSNMRKMIESKRPLYITLHLACGFGKTITTCYLMATHGRKTVICVPNKMLIHQWKTQVEAVGLEHKISIDGVSSLLKELKTQSPDVLIVVSRHLTNDAFCKYINKHYDLFILDESHTYNLMNNTAVTRFLAYYPPMMCYFLTATPRPANRIYCNSIINIAKLSDLKKTIYAVDSFFEPYSTDNIRHMVKRLDGPSNKYHIYTEKLLSVDEPRNQLILNTLVEEFKSGTINRILVITKLREHMVLFYKRLLDLFGPEVVFIGDAQNRRTPDMVKSIKELNRFIFVSTLFYSGTGLDIPSLDSLFICSAVINNMQIEQLLGRVCRETELLDRTVYVFPNTSIKEIKYMIGNFMQRIISLSVDKLGFKQESYRKHQESDPTSVCTTSSREERVLNRIFNSQNR.

In terms of domain architecture, Helicase ATP-binding spans 100-256 (MIESKRPLYI…NSIINIAKLS (157 aa)). 113 to 120 (LACGFGKT) lines the ATP pocket. The short motif at 206-209 (DESH) is the DESH box element.

It belongs to the helicase family. Poxviruses subfamily. Interacts with G2. Might be part of a transcription complex composed at least of G2, A18, and H5.

The protein resides in the virion. Functionally, DNA helicase which seems to act as a postreplicative transcription termination factor. Involved in ATP-dependent release of nascent RNA. Forms a stable complex with single-stranded DNA, and to a lesser extent RNA. In Rabbitpox virus (strain Utrecht) (RPV), this protein is Transcript termination protein A18.